Here is a 247-residue protein sequence, read N- to C-terminus: Probable membrane transporter protein y4hK (247 aa).

6 consecutive transmembrane segments (helical) span residues 5–25 (AIGL…VGQA), 31–51 (IAAM…ALAL), 74–94 (VYPF…VHLP), 121–141 (SALV…ITGA), 202–222 (FLPW…LIGS), and 227–247 (ASWL…KLLW).

It belongs to the 4-toluene sulfonate uptake permease (TSUP) (TC 2.A.102) family.

Its subcellular location is the cell membrane. The polypeptide is Probable membrane transporter protein y4hK (Sinorhizobium fredii (strain NBRC 101917 / NGR234)).